We begin with the raw amino-acid sequence, 233 residues long: Pre-hexon-linking protein VIII (233 aa).

A Phosphothreonine; by host modification is found at T64. Residues S112–A163 constitute a propeptide that is removed on maturation. S180 is modified (phosphoserine; by host).

Belongs to the adenoviridae hexon-linking protein family. Interacts with the peripentonal hexons as well as the hexons in the facets. Part of a complex composed of the core-capsid bridging protein, the endosome lysis protein VI and the hexon-linking protein VIII; these interactions bridge the virus core to the capsid. Post-translationally, cleaved by the viral protease during virion maturation. May cause the middle segment to be shed from the capsid.

It is found in the virion. The protein resides in the host nucleus. Structural component of the virion that acts as a cement protein on the capsid interior and which glue the peripentonal hexons and group-of-nine hexons together. In Homo sapiens (Human), this protein is Pre-hexon-linking protein VIII.